Here is a 465-residue protein sequence, read N- to C-terminus: Endo-1,3-1,4-beta-glycanase EglC (465 aa).

3 Hemolysin-type calcium-binding repeats span residues 33-50 (YGTA…VDVT), 105-122 (FGNS…SQTI), and 123-140 (NGGA…ADTF). A GH16 domain is found at 213-462 (LDRSVLTQTF…YVKAYSLDAD (250 aa)). Glutamate 349 functions as the Nucleophile in the catalytic mechanism. Residue glutamate 354 is the Proton donor of the active site.

Belongs to the glycosyl hydrolase 16 family.

The protein localises to the secreted. The protein operates within glycan metabolism; exopolysaccharide biosynthesis. In terms of biological role, cleaves high molecular weight succinoglycan to yield LMW succinoglycan. Dynamically regulates the molecular weight distribution of succinoglycan by cleaving nascent succinoglycan only during a limited period after its synthesis, perhaps before it undergoes a time-dependent change in its conformation or aggregation state. This is Endo-1,3-1,4-beta-glycanase EglC (eglC) from Rhizobium meliloti (strain 1021) (Ensifer meliloti).